A 218-amino-acid polypeptide reads, in one-letter code: Protein-L-isoaspartate O-methyltransferase (218 aa).

Serine 60 is an active-site residue.

This sequence belongs to the methyltransferase superfamily. L-isoaspartyl/D-aspartyl protein methyltransferase family.

The protein resides in the cytoplasm. The enzyme catalyses [protein]-L-isoaspartate + S-adenosyl-L-methionine = [protein]-L-isoaspartate alpha-methyl ester + S-adenosyl-L-homocysteine. In terms of biological role, catalyzes the methyl esterification of L-isoaspartyl residues in peptides and proteins that result from spontaneous decomposition of normal L-aspartyl and L-asparaginyl residues. It plays a role in the repair and/or degradation of damaged proteins. The chain is Protein-L-isoaspartate O-methyltransferase from Roseiflexus castenholzii (strain DSM 13941 / HLO8).